Here is a 389-residue protein sequence, read N- to C-terminus: E3 ubiquitin-protein ligase E3D (389 aa).

A2 bears the N-acetylalanine mark. Positions 129 to 159 (PLPSENWGALVGEWCCHPDPFANKSLHPQEN) match the BRAT1-like motif motif. C144 is a binding site for Zn(2+). The interval 235–257 (QSSERSFPIIPRSWFVQSVIAQC) is interaction with UBE2C. The HECT-like stretch occupies residues 353–389 (LPSATCLELLLILSKSNANLPSSLRRVNSFQVAFLKM).

In terms of assembly, interacts with UBE2C/UbcH10 (E2 ubiquitin-conjugating enzyme). In vitro, interacts with cyclin-B. Post-translationally, ubiquitinated by UBCH10 (E2 ubiquitin-conjugating enzyme).

It is found in the cytoplasm. It catalyses the reaction S-ubiquitinyl-[E2 ubiquitin-conjugating enzyme]-L-cysteine + [acceptor protein]-L-lysine = [E2 ubiquitin-conjugating enzyme]-L-cysteine + N(6)-ubiquitinyl-[acceptor protein]-L-lysine.. It participates in protein modification; protein ubiquitination. Its function is as follows. E3 ubiquitin-protein ligase which accepts ubiquitin from specific E2 ubiquitin-conjugating enzymes, and transfers it to substrates, generally promoting their degradation by the proteasome. Independently of its E3 ubiquitin-protein ligase activity, acts as an inhibitor of CPSF3 endonuclease activity by blocking CPSF3 active site. The chain is E3 ubiquitin-protein ligase E3D (UBE3D) from Homo sapiens (Human).